We begin with the raw amino-acid sequence, 159 residues long: Ubiquitin-conjugating enzyme E2 variant 1B (159 aa).

The 149-residue stretch at 11 to 159 (PRNFRLLEEL…KGLVVKCCVM (149 aa)) folds into the UBC core domain.

Belongs to the ubiquitin-conjugating enzyme family. As to quaternary structure, heterodimer with UBC35 or UBC36. Expressed in roots, shoots, leaves, stems and flowers, but not in pollen.

Functionally, has no ubiquitin ligase activity on its own. The heterodimer with UBC catalyzes the synthesis of non-canonical poly-ubiquitin chains that are linked through 'Lys-63'. This type of poly-ubiquitination does not lead to protein degradation by the proteasome. Mediates transcriptional activation of target genes. May play a role in the control of progress through the cell cycle and differentiation. May play a role in the error-free DNA repair pathway and contributes to the survival of cells after DNA damage. The polypeptide is Ubiquitin-conjugating enzyme E2 variant 1B (UEV1B) (Arabidopsis thaliana (Mouse-ear cress)).